A 421-amino-acid chain; its full sequence is 3-isopropylmalate dehydratase large subunit (421 aa).

[4Fe-4S] cluster-binding residues include Cys-302, Cys-362, and Cys-365.

Belongs to the aconitase/IPM isomerase family. LeuC type 2 subfamily. In terms of assembly, heterodimer of LeuC and LeuD. [4Fe-4S] cluster is required as a cofactor.

It catalyses the reaction (2R,3S)-3-isopropylmalate = (2S)-2-isopropylmalate. It functions in the pathway amino-acid biosynthesis; L-leucine biosynthesis; L-leucine from 3-methyl-2-oxobutanoate: step 2/4. Functionally, catalyzes the isomerization between 2-isopropylmalate and 3-isopropylmalate, via the formation of 2-isopropylmaleate. The protein is 3-isopropylmalate dehydratase large subunit of Campylobacter concisus (strain 13826).